The chain runs to 329 residues: Glucosyl-3-phosphoglycerate synthase (329 aa).

UDP-alpha-D-glucose contacts are provided by residues 55-59, Ser86, Lys119, and 139-141; these read PALDE and DSD. Asp141 provides a ligand contact to Mn(2+). (2R)-3-phosphoglycerate is bound at residue 189–192; it reads GRVT. 234–237 lines the UDP-alpha-D-glucose pocket; it reads YGVE. His263 contacts Mn(2+). Asn265 contacts (2R)-3-phosphoglycerate.

Belongs to the glycosyltransferase 2 family. As to quaternary structure, homodimer. The cofactor is Mg(2+). Mn(2+) serves as cofactor.

It catalyses the reaction an NDP-alpha-D-glucose + (2R)-3-phosphoglycerate = (2R)-2-O-(alpha-D-glucopyranosyl)-3-phospho-glycerate + a ribonucleoside 5'-diphosphate + H(+). The enzyme catalyses (2R)-3-phosphoglycerate + UDP-alpha-D-glucose = (2R)-2-O-(alpha-D-glucopyranosyl)-3-phospho-glycerate + UDP + H(+). The catalysed reaction is GDP-D-glucose + (2R)-3-phosphoglycerate = (2R)-2-O-(alpha-D-glucopyranosyl)-3-phospho-glycerate + GDP + H(+). Its function is as follows. Involved in the biosynthesis of 6-O-methylglucose lipopolysaccarides (MGLPs). Catalyzes the transfer of the glucose moiety from UDP-alpha-D-glucose (UDP-Glc) to the position 2 of 3-phospho-D-glycerate (3-PGA) to form glucosyl-3-phosphoglycerate (GPG). To a lesser extent can also use GDP-Glc but not UDP-Gal or UDP-GlcNAc as the sugar donor. This Mycolicibacterium paratuberculosis (strain ATCC BAA-968 / K-10) (Mycobacterium paratuberculosis) protein is Glucosyl-3-phosphoglycerate synthase.